The sequence spans 418 residues: Cytochrome P450 monooxygenase ABA2 (418 aa).

Cysteine 355 lines the heme pocket.

Belongs to the cytochrome P450 family. Heme serves as cofactor.

Its pathway is hormone biosynthesis. Functionally, cytochrome P450 monooxygenase involved in the biosynthesis of abscisic acid (ABA), a phytohormone that acts antagonistically toward salicylic acid (SA), jasmonic acid (JA) and ethylene (ETH) signaling, to impede plant defense responses. During pathogen-host interaction, ABA plays a dual role in disease severity by increasing plant susceptibility and accelerating pathogenesis in the fungus itself. The first step of the pathway catalyzes the reaction from farnesyl diphosphate to alpha-ionylideneethane performed by the alpha-ionylideneethane synthase ABA3 via a three-step reaction mechanism involving 2 neutral intermediates, beta-farnesene and allofarnesene. The cytochrome P450 monooxygenase ABA1 might then be involved in the conversion of alpha-ionylideneethane to alpha-ionylideneacetic acid. Alpha-ionylideneacetic acid is further converted to abscisic acid in 2 steps involving the cytochrome P450 monooxygenase ABA2 and the short-chain dehydrogenase/reductase ABA4, via the intermediates 1'-deoxy-ABA or 1',4'-trans-diol-ABA, depending on the order of action of these 2 enzymes. ABA2 is responsible for the hydroxylation of carbon atom C-1' and ABA4 might be involved in the oxidation of the C-4' carbon atom. This chain is Cytochrome P450 monooxygenase ABA2, found in Pyricularia oryzae (strain Y34) (Rice blast fungus).